Reading from the N-terminus, the 170-residue chain is Myosin regulatory light chain 11 (170 aa).

Residue Ala-2 is modified to N,N,N-trimethylalanine. Phosphoserine occurs at positions 16 and 17. Residues Thr-26 and Thr-36 each carry the phosphothreonine modification. An EF-hand 1 domain is found at 26-61 (TQIQEFKEAFTVIDQNRDGIIDKEDLRDTFAAMGRL). Ca(2+) is bound by residues Asp-39, Asn-41, Asp-43, and Asp-50. Ser-76 is modified (phosphoserine). EF-hand domains follow at residues 96 to 131 (DPED…QCDR) and 132 to 167 (FSQE…GDAK). Position 102 is a phosphothreonine (Thr-102).

As to quaternary structure, myosin is a hexamer of 2 heavy chains and 4 light chains. In terms of processing, n,N,N-trimethylalanine found in this myosin light chain would not have been detected in the N-terminal tryptic peptide in PubMed:863872 and PubMed:352892 because it would remain trimethylated and ninhydrin negative after hydrolysis.

Its function is as follows. Myosin regulatory subunit that plays an essential role to maintain muscle integrity during early development. Plays a role in muscle contraction. The chain is Myosin regulatory light chain 11 (MYL11) from Oryctolagus cuniculus (Rabbit).